The sequence spans 207 residues: Large ribosomal subunit protein uL4 (207 aa).

The interval 49–78 (HAVKNRSAVRGGGKKPWRQKGTGRARQGSI) is disordered. A compositionally biased stretch (basic residues) spans 60–71 (GGKKPWRQKGTG).

Belongs to the universal ribosomal protein uL4 family. Part of the 50S ribosomal subunit.

In terms of biological role, one of the primary rRNA binding proteins, this protein initially binds near the 5'-end of the 23S rRNA. It is important during the early stages of 50S assembly. It makes multiple contacts with different domains of the 23S rRNA in the assembled 50S subunit and ribosome. Forms part of the polypeptide exit tunnel. The chain is Large ribosomal subunit protein uL4 from Ligilactobacillus salivarius (strain UCC118) (Lactobacillus salivarius).